The following is an 841-amino-acid chain: DNA ligase (841 aa).

NAD(+) contacts are provided by residues 33–37 (DAQYD), 82–83 (SL), and Glu114. Residue Lys116 is the N6-AMP-lysine intermediate of the active site. Residues Arg137, Glu174, Lys300, and Lys324 each coordinate NAD(+). 4 residues coordinate Zn(2+): Cys418, Cys421, Cys436, and Cys442. The BRCT domain occupies 758-841 (EKTGPLDGQT…AFLGEHGQQR (84 aa)).

The protein belongs to the NAD-dependent DNA ligase family. LigA subfamily. Requires Mg(2+) as cofactor. Mn(2+) serves as cofactor.

It catalyses the reaction NAD(+) + (deoxyribonucleotide)n-3'-hydroxyl + 5'-phospho-(deoxyribonucleotide)m = (deoxyribonucleotide)n+m + AMP + beta-nicotinamide D-nucleotide.. DNA ligase that catalyzes the formation of phosphodiester linkages between 5'-phosphoryl and 3'-hydroxyl groups in double-stranded DNA using NAD as a coenzyme and as the energy source for the reaction. It is essential for DNA replication and repair of damaged DNA. The sequence is that of DNA ligase from Xanthomonas oryzae pv. oryzae (strain MAFF 311018).